The chain runs to 902 residues: 4-hydroxyphenylacetate decarboxylase glycyl radical subunit (902 aa).

A PFL domain is found at 38-774; it reads KRAEDLLDVY…ATLATPDGRL (737 aa). 2 residues coordinate 4-hydroxyphenylacetate: S348 and C507. C507 serves as the catalytic Cysteine radical intermediate. The active-site Proton donor is E509. 4-hydroxyphenylacetate-binding residues include H540 and E641. A Glycine radical domain is found at 782-902; it reads GSVSAYAGTD…VIARTEYEGV (121 aa). Glycine radical is present on G877.

Belongs to the glycyl radical enzyme (GRE) family. HPAD subfamily. Heterooctamer consisting of 4 large (HpdB) subunits and 4 small (HpdC) subunits, arranged as a tetramer of heterodimers. Also forms a catalytically inactive homodimer. In terms of processing, requires the activating protein CsdA to generate the key active site glycyl radical that is involved in catalysis. Phosphorylated on serine. Phosphorylation may trigger the formation of the active heterooctamers and thereby regulates enzyme activity.

The enzyme catalyses 4-hydroxyphenylacetate + H(+) = 4-methylphenol + CO2. It catalyses the reaction 3,4-dihydroxyphenylacetate + H(+) = 4-methylcatechol + CO2. Functionally, glycyl radical subunit of the HPA decarboxylase that decarboxylates phenylacetates with a hydroxyl group in the p-position. Active toward 4-hydroxyphenylacetate and 3,4-dihydroxyphenylacetate, forming 4-methylphenol and 4-methylcatechol, respectively. Is likely involved in the catabolism of aromatic amino acids such as tyrosine fermentation. 4-methylphenol (p-cresol) formation provides metabolic toxicity, which allows an active suppression of other microbes and may provide growth advantages for the producers in highly competitive environments. The large subunit is the catalytic subunit that binds the substrate. The polypeptide is 4-hydroxyphenylacetate decarboxylase glycyl radical subunit (Clostridioides difficile (strain 630) (Peptoclostridium difficile)).